The following is a 155-amino-acid chain: MKLQLCAVGRLRSGPERDLVEDYLARFERTGRPLGLPPVQLLEFEDRKGGGMEAEADLIAKAVAPGAALVVLDERGRTLSSPEFADHLAHWRDSGRDVALAIGGADGLAPRLRDRADLAMSFGRMVWPHMLVRVMLAEQLYRAATILAGSPYHRV.

S-adenosyl-L-methionine is bound by residues L72, G103, and 122 to 127 (FGRMVW).

The protein belongs to the RNA methyltransferase RlmH family. Homodimer.

It is found in the cytoplasm. The catalysed reaction is pseudouridine(1915) in 23S rRNA + S-adenosyl-L-methionine = N(3)-methylpseudouridine(1915) in 23S rRNA + S-adenosyl-L-homocysteine + H(+). Its function is as follows. Specifically methylates the pseudouridine at position 1915 (m3Psi1915) in 23S rRNA. This Cereibacter sphaeroides (strain ATCC 17023 / DSM 158 / JCM 6121 / CCUG 31486 / LMG 2827 / NBRC 12203 / NCIMB 8253 / ATH 2.4.1.) (Rhodobacter sphaeroides) protein is Ribosomal RNA large subunit methyltransferase H.